The following is a 229-amino-acid chain: MTPKLIVALDFDNQDNALQLVEKLDPNHCALKVGSELFTLLGPQFVKELVRREFKVFLDLKFHDIPNTVAKACHSAAELGVWMMNVHAIGGLKMLQAARESLKTYGKDKPLLIAVTVLTSFEEAELASVGISNTLPEQATHLAMLAREAGLDGVVSSAHEVKIIKQKCGENFITVTPGIRLPNNLKDDQSRVMTPQQAIREGSDFLVIGRPITQASNPHEVVSALLRDL.

Residues Asp10, Lys32, 59 to 68, Thr119, Arg180, Gln189, Gly209, and Arg210 contribute to the substrate site; that span reads DLKFHDIPNT. Lys61 acts as the Proton donor in catalysis.

The protein belongs to the OMP decarboxylase family. Type 1 subfamily. As to quaternary structure, homodimer.

The catalysed reaction is orotidine 5'-phosphate + H(+) = UMP + CO2. The protein operates within pyrimidine metabolism; UMP biosynthesis via de novo pathway; UMP from orotate: step 2/2. Catalyzes the decarboxylation of orotidine 5'-monophosphate (OMP) to uridine 5'-monophosphate (UMP). The polypeptide is Orotidine 5'-phosphate decarboxylase (Legionella pneumophila (strain Corby)).